The chain runs to 69 residues: Putative membrane protein insertion efficiency factor (69 aa).

The protein belongs to the UPF0161 family.

Its subcellular location is the cell membrane. In terms of biological role, could be involved in insertion of integral membrane proteins into the membrane. The chain is Putative membrane protein insertion efficiency factor from Thermomicrobium roseum (strain ATCC 27502 / DSM 5159 / P-2).